Reading from the N-terminus, the 78-residue chain is Large ribosomal subunit protein bL28 (78 aa).

The disordered stretch occupies residues 1 to 31; the sequence is MAAHCQVTGAEPGFGHSISHSHRRNKRRFDP.

This sequence belongs to the bacterial ribosomal protein bL28 family.

This is Large ribosomal subunit protein bL28 from Paenarthrobacter aurescens (strain TC1).